A 530-amino-acid chain; its full sequence is ATP synthase subunit alpha (530 aa).

172-179 (GDRQTGKT) lines the ATP pocket.

The protein belongs to the ATPase alpha/beta chains family. As to quaternary structure, F-type ATPases have 2 components, CF(1) - the catalytic core - and CF(0) - the membrane proton channel. CF(1) has five subunits: alpha(3), beta(3), gamma(1), delta(1), epsilon(1). CF(0) has three main subunits: a(1), b(2) and c(9-12). The alpha and beta chains form an alternating ring which encloses part of the gamma chain. CF(1) is attached to CF(0) by a central stalk formed by the gamma and epsilon chains, while a peripheral stalk is formed by the delta and b chains.

It localises to the cell inner membrane. The catalysed reaction is ATP + H2O + 4 H(+)(in) = ADP + phosphate + 5 H(+)(out). In terms of biological role, produces ATP from ADP in the presence of a proton gradient across the membrane. The alpha chain is a regulatory subunit. This chain is ATP synthase subunit alpha, found in Phocaeicola vulgatus (strain ATCC 8482 / DSM 1447 / JCM 5826 / CCUG 4940 / NBRC 14291 / NCTC 11154) (Bacteroides vulgatus).